The chain runs to 298 residues: Ribosomal protein uL3 glutamine methyltransferase (298 aa).

It belongs to the protein N5-glutamine methyltransferase family. PrmB subfamily.

It catalyses the reaction L-glutaminyl-[ribosomal protein uL3] + S-adenosyl-L-methionine = N(5)-methyl-L-glutaminyl-[ribosomal protein uL3] + S-adenosyl-L-homocysteine + H(+). Methylates large ribosomal subunit protein uL3 on a specific glutamine residue. The chain is Ribosomal protein uL3 glutamine methyltransferase from Bordetella pertussis (strain Tohama I / ATCC BAA-589 / NCTC 13251).